The chain runs to 83 residues: Mu-theraphotoxin-Hhn2o (83 aa).

An N-terminal signal peptide occupies residues 1-21 (MKASMFLALAGLVLLFVVGYA). A propeptide spanning residues 22 to 48 (SESEEKEFPIELLSKIFAVDVFKGEER) is cleaved from the precursor. 3 disulfides stabilise this stretch: Cys50–Cys65, Cys57–Cys70, and Cys64–Cys77. Leu81 carries the leucine amide modification.

It belongs to the neurotoxin 10 (Hwtx-1) family. 15 (Hntx-3) subfamily. As to quaternary structure, monomer. In terms of tissue distribution, expressed by the venom gland.

Its subcellular location is the secreted. In terms of biological role, lethal neurotoxin. Selectively blocks tetrodotoxin-sensitive voltage-gated sodium channels (Nav). Does not affect tetrodotoxin-resistant voltage-gated sodium channels or calcium channels. The protein is Mu-theraphotoxin-Hhn2o of Cyriopagopus hainanus (Chinese bird spider).